We begin with the raw amino-acid sequence, 275 residues long: Photosystem II extrinsic protein O (275 aa).

A signal peptide spans 1–28 (MRFRTLLIAFLALCLGLITACSEGPANA).

This sequence belongs to the PsbO family. PSII is composed of 1 copy each of membrane proteins PsbA, PsbB, PsbC, PsbD, PsbE, PsbF, PsbH, PsbI, PsbJ, PsbK, PsbL, PsbM, PsbT, PsbX, PsbY, PsbZ, Psb30/Ycf12, peripheral proteins PsbO, CyanoQ (PsbQ), PsbU, PsbV and a large number of cofactors. It forms dimeric complexes.

Its subcellular location is the cellular thylakoid membrane. In terms of biological role, one of the extrinsic, lumenal subunits of photosystem II (PSII), which stabilize and protect the oxygen-evolving complex. PSII is a light-driven water plastoquinone oxidoreductase, using light energy to abstract electrons from H(2)O, generating a proton gradient subsequently used for ATP formation. Required for dimerization of PSII and for binding of PsbQ to PSII. In Crocosphaera subtropica (strain ATCC 51142 / BH68) (Cyanothece sp. (strain ATCC 51142)), this protein is Photosystem II extrinsic protein O.